The primary structure comprises 734 residues: Transcriptional regulator AacuB (734 aa).

The segment at residues C26–C52 is a DNA-binding region (zn(2)-C6 fungal-type). Positions F86 to L107 are enriched in basic and acidic residues. Positions F86–K122 are disordered.

It localises to the nucleus. In terms of biological role, transcriptional regulator; part of the gene cluster that mediates the biosynthesis of the tetrahydroxanthone dimer secalonic acid D. In Aspergillus aculeatus (strain ATCC 16872 / CBS 172.66 / WB 5094), this protein is Transcriptional regulator AacuB.